A 307-amino-acid chain; its full sequence is tRNA dimethylallyltransferase (307 aa).

7 to 14 (GPTAGGKT) contributes to the ATP binding site. 9–14 (TAGGKT) lines the substrate pocket. Positions 32-35 (DSRQ) are interaction with substrate tRNA.

This sequence belongs to the IPP transferase family. As to quaternary structure, monomer. Requires Mg(2+) as cofactor.

The enzyme catalyses adenosine(37) in tRNA + dimethylallyl diphosphate = N(6)-dimethylallyladenosine(37) in tRNA + diphosphate. Functionally, catalyzes the transfer of a dimethylallyl group onto the adenine at position 37 in tRNAs that read codons beginning with uridine, leading to the formation of N6-(dimethylallyl)adenosine (i(6)A). The polypeptide is tRNA dimethylallyltransferase (Elusimicrobium minutum (strain Pei191)).